The sequence spans 672 residues: Acetyl-coenzyme A synthetase (672 aa).

CoA contacts are provided by residues 205–208 (RGGK) and T325. ATP-binding positions include 401-403 (GEP), 425-430 (DTYWQT), D516, and R531. S539 is a CoA binding site. R542 is an ATP binding site. CoA is bound at residue R600.

Belongs to the ATP-dependent AMP-binding enzyme family.

It catalyses the reaction acetate + ATP + CoA = acetyl-CoA + AMP + diphosphate. In Phycomyces blakesleeanus (strain ATCC 8743b / DSM 1359 / FGSC 10004 / NBRC 33097 / NRRL 1555), this protein is Acetyl-coenzyme A synthetase (facA).